The primary structure comprises 201 residues: Cell division protein SepF (201 aa).

The span at 27–38 (VQERTSVQRDSR) shows a compositional bias: basic and acidic residues. Residues 27–99 (VQERTSVQRD…PRIQNKDSVR (73 aa)) form a disordered region. Composition is skewed to polar residues over residues 43-54 (QEASQRSHMTNS) and 82-92 (DNSYQQATPRI).

Belongs to the SepF family. As to quaternary structure, homodimer. Interacts with FtsZ.

Its subcellular location is the cytoplasm. Cell division protein that is part of the divisome complex and is recruited early to the Z-ring. Probably stimulates Z-ring formation, perhaps through the cross-linking of FtsZ protofilaments. Its function overlaps with FtsA. This chain is Cell division protein SepF, found in Streptococcus agalactiae serotype III (strain NEM316).